We begin with the raw amino-acid sequence, 154 residues long: 17 kDa surface antigen (154 aa).

Positions 1–19 (MKLLSKIMIIALAASTLQA) are cleaved as a signal peptide. A lipid anchor (N-palmitoyl cysteine) is attached at cysteine 20. Residue cysteine 20 is the site of S-diacylglycerol cysteine attachment.

This sequence belongs to the rickettsiale 17 kDa surface antigen family.

The protein localises to the cell outer membrane. This chain is 17 kDa surface antigen (omp), found in Rickettsia amblyommatis (Rickettsia amblyommii).